The sequence spans 64 residues: Large ribosomal subunit protein bL33 (64 aa).

This sequence belongs to the bacterial ribosomal protein bL33 family.

The chain is Large ribosomal subunit protein bL33 from Gloeothece citriformis (strain PCC 7424) (Cyanothece sp. (strain PCC 7424)).